Consider the following 505-residue polypeptide: MAAENSKQFWKRSAKLPGSIQPVYGAQHPPLDPRLTKNFIKERSKVNTVPLKNKKASSFHEFARNTSDAWDIGDDEEEDFSSPSFQTLNSKVALATAAQVLENHSKLRVKPERSQSTTSDVPANYKVIKSSSDAQLSRNSSDTCLRNPLHKQQSLPLRPIIPLVARISDQNASGAPPMTVREKTRLEKFRQLLSSQNTDLDELRKCSWPGVPREVRPITWRLLSGYLPANTERRKLTLQRKREEYFGFIEQYYDSRNEEHHQDTYRQIHIDIPRTNPLIPLFQQPLVQEIFERILFIWAIRHPASGYVQGINDLVTPFFVVFLSEYVEEDVENFDVTNLSQDMLRSIEADSFWCMSKLLDGIQDNYTFAQPGIQKKVKALEELVSRIDEQVHNHFRRYEVEYLQFAFRWMNNLLMRELPLRCTIRLWDTYQSEPEGFSHFHLYVCAAFLIKWRKEILDEEDFQGLLMLLQNLPTIHWGNEEIGLLLAEAYRLKYMFADAPNHYRR.

The residue at position 2 (alanine 2) is an N-acetylalanine. Phosphoserine occurs at positions 58 and 116. Residues 105–146 (SKLRVKPERSQSTTSDVPANYKVIKSSSDAQLSRNSSDTCLR) are disordered. Positions 129-146 (KSSSDAQLSRNSSDTCLR) are enriched in polar residues. Phosphoserine is present on serine 154. The Rab-GAP TBC domain maps to 210–434 (GVPREVRPIT…RLWDTYQSEP (225 aa)).

As to quaternary structure, interacts with ACBD3 and ARFGEF1. Interacts with YWHAB, YWHAE, YWHAG, YWHAH, YWHAQ and YWHAZ.

Functionally, may act as a GTPase-activating protein for Rab family protein(s). This Homo sapiens (Human) protein is TBC1 domain family member 22B (TBC1D22B).